Reading from the N-terminus, the 521-residue chain is MEVLESGEQSVLQWDRKLSELSEPGETEALMYHTHFSELLDEFSQNVLGQLLNDPFLSEKSVSMEVEPSPTSPAPLIQAEHSYSLSEEPRAQSPFTHVAASDGFNDEEVESEKWYLSTEFPSATIKTEPITEEQPPGLVPSVTLTITAISTPFEKEESPLDMSAGGDSSCQTLIPKIKLEPHEVDQFLNFSPKEASVDQLHLPPTPPSSHSSDSEGSLSPNPRLHPFSLSQAHSPGRAMPRGPSALSTSPLLTAPHKLQGSGPLVLTEEEKRTLIAEGYPIPTKLPLTKSEEKALKKIRRKIKNKISAQESRRKKKEYMDSLEKKVESCSTENLELRKKVEVLENTNRTLLQQLQKLQTLVMGKVSRTCKLAGTQTGTCLMVVVLCFAVAFGSLFQGYGLYPSATKMALPSQHPLSEPYTASVVRSRNLLIYEEHSSLEESSSPASAGELGGWDRGSSLLRASSGLEALPEVDLPHFIISKETSLEKSVLLELQQHLVSSKLEGNETLKVVELERRVNATF.

Topologically, residues 1 to 378 are cytoplasmic; it reads MEVLESGEQS…CKLAGTQTGT (378 aa). A Phosphoserine modification is found at S93. A Glycyl lysine isopeptide (Lys-Gly) (interchain with G-Cter in SUMO2) cross-link involves residue K178. Phosphoserine is present on S191. Residues 196-264 are disordered; sequence SVDQLHLPPT…PHKLQGSGPL (69 aa). Over residues 208–220 the composition is skewed to low complexity; that stretch reads SSHSSDSEGSLSP. The bZIP domain maps to 294 to 357; the sequence is ALKKIRRKIK…RTLLQQLQKL (64 aa). The segment at 296-325 is basic motif; it reads KKIRRKIKNKISAQESRRKKKEYMDSLEKK. A leucine-zipper region spans residues 336–357; it reads LRKKVEVLENTNRTLLQQLQKL. The chain crosses the membrane as a helical; Signal-anchor for type II membrane protein span at residues 379–399; that stretch reads CLMVVVLCFAVAFGSLFQGYG. Residues 400–521 lie on the Lumenal side of the membrane; sequence LYPSATKMAL…ELERRVNATF (122 aa). Residues 427–430 carry the S1P recognition motif; that stretch reads RNLL. N-linked (GlcNAc...) asparagine glycans are attached at residues N505 and N518.

It belongs to the bZIP family. ATF subfamily. Binds DNA as a dimer. Post-translationally, upon ER stress, translocated to the Golgi apparatus, where it is processed by regulated intramembrane proteolysis (RIP) to release the cytosol-facing N-terminal transcription factor domain. The cleavage is performed sequentially by site-1 and site-2 proteases (S1P/MBTPS1 and S2P/MBTPS2). In terms of processing, N-glycosylated. Ubiquitinated by HRD1/SYVN1; undergoes 'Lys-48'-linked ubiquitination, followed by rapid proteasomal degradation under normal conditions. Upon ER stress, SYVN1 E3 ubiquitin-protein ligase dissociates from its substrate, ubiquitination does not occur and CREB3L2 is stabilized.

It is found in the endoplasmic reticulum membrane. The protein resides in the nucleus. Transcription factor involved in unfolded protein response (UPR). In the absence of endoplasmic reticulum (ER) stress, inserted into ER membranes, with N-terminal DNA-binding and transcription activation domains oriented toward the cytosolic face of the membrane. In response to ER stress, transported to the Golgi, where it is cleaved in a site-specific manner by resident proteases S1P/MBTPS1 and S2P/MBTPS2. The released N-terminal cytosolic domain is translocated to the nucleus to effect transcription of specific target genes. Plays a critical role in chondrogenesis by activating the transcription of SEC23A, which promotes the transport and secretion of cartilage matrix proteins, and possibly that of ER biogenesis-related genes. In a neuroblastoma cell line, protects cells from ER stress-induced death. In vitro activates transcription of target genes via direct binding to the CRE site. The protein is Cyclic AMP-responsive element-binding protein 3-like protein 2 (Creb3l2) of Rattus norvegicus (Rat).